Consider the following 337-residue polypeptide: MQFIDYVKIYVKAGDGGRGCISFRREKYVPKGGPDGGDGGKGGDVIIQASSELHTLLDHRYQKVYKAQRGQHGKGSNMKGKDGENLIIKVPVGTVVKDAETEEVLADLDEEEKYFIVAKGGRGGFGNAHFATPTNQAPRYAQPGEKGQERWVILELKLLADVGLIGLPNAGKSTLISVISSAKPKIADYPFTTLIPVLGVVKYENYQSFVVADIPGLIEGAHKGAGLGHQFLRHVERTSLLLHLVDVSDFSESDPREDFEKIQKELELYNPALTKKPFAVVGTKIDIAYKGDRLGKLKKYCEEKGIDFFPISAVKKEGIDKLLHYLSEKVGKKCGLL.

Residues 1–159 (MQFIDYVKIY…RWVILELKLL (159 aa)) form the Obg domain. Positions 160-331 (ADVGLIGLPN…LLHYLSEKVG (172 aa)) constitute an OBG-type G domain. Residues 166–173 (GLPNAGKS), 191–195 (FTTLI), 213–216 (DIPG), 283–286 (TKID), and 312–314 (SAV) contribute to the GTP site. Mg(2+) contacts are provided by S173 and T193.

The protein belongs to the TRAFAC class OBG-HflX-like GTPase superfamily. OBG GTPase family. Monomer. The cofactor is Mg(2+).

The protein resides in the cytoplasm. Functionally, an essential GTPase which binds GTP, GDP and possibly (p)ppGpp with moderate affinity, with high nucleotide exchange rates and a fairly low GTP hydrolysis rate. Plays a role in control of the cell cycle, stress response, ribosome biogenesis and in those bacteria that undergo differentiation, in morphogenesis control. The protein is GTPase Obg of Thermodesulfovibrio yellowstonii (strain ATCC 51303 / DSM 11347 / YP87).